Reading from the N-terminus, the 312-residue chain is tRNA dimethylallyltransferase (312 aa).

Gly17–Ser24 lines the ATP pocket. Substrate is bound at residue Thr19–Ser24.

The protein belongs to the IPP transferase family. Monomer. Mg(2+) serves as cofactor.

It catalyses the reaction adenosine(37) in tRNA + dimethylallyl diphosphate = N(6)-dimethylallyladenosine(37) in tRNA + diphosphate. Its function is as follows. Catalyzes the transfer of a dimethylallyl group onto the adenine at position 37 in tRNAs that read codons beginning with uridine, leading to the formation of N6-(dimethylallyl)adenosine (i(6)A). The chain is tRNA dimethylallyltransferase from Zymomonas mobilis subsp. mobilis (strain ATCC 31821 / ZM4 / CP4).